A 409-amino-acid polypeptide reads, in one-letter code: MSMMLSNWALSPRYVGQRNLIHCTTLFHTLTRWAKDADDKYHDINSMYENMFTPSNDNVSILQDEGKSDYDTTKTSSMQEDISAFNKDLYNFYNIGYAKQIMSASQLENIVKAKGRFVIQSLSTSPYYNLALENYVFKNTPRAKRGPDNCRLLFYINDRCAVIGKNQNLWQEVDLAKLKSKNFELLRRFSGGGTVLHDLGNVNYSYLTSREKFETKFFNKMIIKWLNSLNPELRLDLNERGDIIQDGFKISGSAYKIAGGKAYHHATMLLNADLEQFSGLLEPSLPNNMEWESSGVHSVKSKIKNVGIITPNQFIAVVSERFQKTFKVDGEIPIYYCDEFKSINDEIKDAMNTLQSEQWKYFSGPKFSVKIKDKGLTIKVEKGMIYDCDRNDLIGLEFKGFLENIDSYT.

The region spanning 146 to 330 is the BPL/LPL catalytic domain; that stretch reads GPDNCRLLFY…RFQKTFKVDG (185 aa). Residues arginine 188, 193–196, and lysine 249 each bind ATP; that span reads GTVL. A (R)-lipoate-binding site is contributed by lysine 249.

The protein belongs to the LplA family. Monomer.

It carries out the reaction L-lysyl-[lipoyl-carrier protein] + (R)-lipoate + ATP = N(6)-[(R)-lipoyl]-L-lysyl-[lipoyl-carrier protein] + AMP + diphosphate + H(+). Its pathway is protein modification; protein lipoylation via exogenous pathway; protein N(6)-(lipoyl)lysine from lipoate: step 1/2. It participates in protein modification; protein lipoylation via exogenous pathway; protein N(6)-(lipoyl)lysine from lipoate: step 2/2. In terms of biological role, catalyzes both the ATP-dependent activation of exogenously supplied lipoate to lipoyl-AMP and the transfer of the activated lipoyl onto the lipoyl domains of lipoate-dependent enzymes. This chain is Putative lipoate-protein ligase A (AIM22), found in Saccharomyces cerevisiae (strain RM11-1a) (Baker's yeast).